The chain runs to 417 residues: Alpha-ionylideneethane synthase aba3 (417 aa).

Belongs to the alpha-ionylideneethane synthase family.

It participates in hormone biosynthesis. In terms of biological role, alpha-ionylideneethane synthase; part of the gene cluster that mediates the biosynthesis of abscisic acid (ABA), a phytohormone that acts antagonistically toward salicylic acid (SA), jasmonic acid (JA) and ethylene (ETH) signaling, to impede plant defense responses. The first step of the pathway catalyzes the reaction from farnesyl diphosphate to alpha-ionylideneethane performed by the alpha-ionylideneethane synthase aba3 via a three-step reaction mechanism involving 2 neutral intermediates, beta-farnesene and allofarnesene. The cytochrome P450 monooxygenase aba1 might then be involved in the conversion of alpha-ionylideneethane to alpha-ionylideneacetic acid. Alpha-ionylideneacetic acid is further converted to abscisic acid in 2 steps involving the cytochrome P450 monooxygenase aba2 and the short-chain dehydrogenase/reductase aba4, via the intermediates 1'-deoxy-ABA or 1',4'-trans-diol-ABA, depending on the order of action of these 2 enzymes. Aba2 is responsible for the hydroxylation of carbon atom C-1' and aba4 might be involved in the oxidation of the C-4' carbon atom. This Botryotinia fuckeliana (Noble rot fungus) protein is Alpha-ionylideneethane synthase aba3.